Here is a 737-residue protein sequence, read N- to C-terminus: Aryl hydrocarbon receptor nuclear translocator 2 (737 aa).

A disordered region spans residues 1-73; the sequence is MATPAAVNPS…SRYDDDQIPG (73 aa). The span at 64-73 shows a compositional bias: basic and acidic residues; it reads SRYDDDQIPG. The 54-residue stretch at 78 to 131 folds into the bHLH domain; that stretch reads YARENHSEIERRRRNKMTQYITELSDMVPTCSALARKPDKLTILRMAVSHMKSM. PAS domains follow at residues 149-221 and 340-406; these read TEQE…ENSM and SMDM…QVVK. Positions 413 to 456 constitute a PAC domain; that stretch reads SVMYRFRMKNREWMLIRTSSFTFQNPYSDEIEYIICTNTNVKQL. Disordered stretches follow at residues 525–556 and 588–721; these read MMVP…FSSS and QVSW…TTNY. Composition is skewed to polar residues over residues 528–543 and 588–626; these read PSST…QGSP and QVSW…YQAD. The span at 627–642 shows a compositional bias: low complexity; that stretch reads PSSYSPLSSPATSSPS. The span at 643–656 shows a compositional bias: polar residues; that stretch reads GNAYSNLANRNTAF. A compositionally biased stretch (low complexity) spans 659-688; the sequence is SGESSQSGGQFQGRPSEVWSQWQSQHHSQQ.

As to quaternary structure, efficient DNA binding requires dimerization with another bHLH protein. Heterodimer with the aryl hydrocarbon receptor (AHR), SIM1 or HIF2A/EPAS-1. In terms of tissue distribution, isoform 1 and isoform 2 are most highly expressed in the brain, eye and skeletal muscle and to a lower degree in liver, heart, kidney and swim bladder. Isoform 3 is most highly expressed in the eye, forebrain, midbrain, hindbrain, skeletal muscle, gills and brain but is barely detectable in liver, heart, kidney and swim bladder. Before the pharyngula period isoform 3 is expressed throughout the entire embryo and during this period extensively in the brain and eye.

The protein localises to the nucleus. Transcription factor that plays a role in the development of the hypothalamo-pituitary axis. Specifically recognizes the xenobiotic response element (XRE). Isoform 1 acts as a transcriptional activator. Isoform 3 acts as a transcriptional repressor. The protein is Aryl hydrocarbon receptor nuclear translocator 2 of Danio rerio (Zebrafish).